Consider the following 119-residue polypeptide: Lamprin 1.8-10 (119 aa).

An N-terminal signal peptide occupies residues 1 to 19 (MAATMQALLVIALLHLATA). Repeat copies occupy residues 41 to 45 (GGLGY), 46 to 50 (GGLGY), 51 to 55 (GGLGY), 56 to 60 (GGLGV), 61 to 65 (AGLGY), 66 to 70 (GGLGY), and 86 to 90 (GGLGY). The tract at residues 41-90 (GGLGYGGLGYGGLGYGGLGVAGLGYGGLGYPGAALGGAYTHHAALGGLGY) is 7 X 5 AA approximate repeats.

The polymeric lamprin chains self-aggregate to form fibers and have secondary structures particularly rich in beta-sheets and in beta-turns.

It localises to the secreted. The protein resides in the extracellular space. It is found in the extracellular matrix. Self-aggregating protein that is part of the soluble form of lamprin. This chain is Lamprin 1.8-10, found in Petromyzon marinus (Sea lamprey).